A 2048-amino-acid polypeptide reads, in one-letter code: MSGRQRTLFQTWGSSISRSSGTPGCSSGTERPQSPGSSKAPLPAAAEAQLESDDDVLLVAAYEAERQLCLENGGFCTSAGALWIYPTNCPVRDYQLHISRAALFCNTLVCLPTGLGKTFIAAVVMYNFYRWFPSGKVVFMAPTKPLVTQQIEACYQVMGIPQSHMAEMTGSTQASTRKEIWCSKRVLFLTPQVMVNDLSRGACPAAEIKCLVIDEAHKALGNYAYCQVVRELVKYTNHFRILALSATPGSDIKAVQQVITNLLIGQIELRSEDSPDILTYSHERKVEKLIVPLGEELAAIQKTYIQILESFARSLIQRNVLMRRDIPNLTKYQIILARDQFRKNPSPNIVGIQQGIIEGEFAICISLYHGYELLQQMGMRSLYFFLCGIMDGTKGMTRSKNELGRNEDFMKLYNHLECMFARTRSTSANGISAIQQGDKNKKFVYSHPKLKKLEEVVIEHFKSWNAENTTEKKRDETRVMIFSSFRDSVQEIAEMLSQHQPIIRVMTFVGHASGKSTKGFTQKEQLEVVKQFRDGGYNTLVSTCVGEEGLDIGEVDLIICFDSQKSPIRLVQRMGRTGRKRQGRIVIILSEGREERIYNQSQSNKRSIYKAISSNRQVLHFYQRSPRMVPDGINPKLHKMFITHGVYEPEKPSRNLQRKSSIFSYRDGMRQSSLKKDWFLSEEEFKLWNRLYRLRDSDEIKEITLPQVQFSSLQNEENKPAQESTTGIHQLSLSEWRLWQDHPLPTHQVDHSDRCRHFIGLMQMIEGMRHEEGECSYELEVESYLQMEDVTSTFIAPRNESNNLASDTFITHKKSSFIKNINQGSSSSVIESDEECAEIVKQTHIKPTKIVSLKKKVSKEIKKDQLKKENNHGIIDSVDNDRNSTVENIFQEDLPNDKRTSDTDEIAATCTINENVIKEPCVLLTECQFTNKSTSSLAGNVLDSGYNSFNDEKSVSSNLFLPFEEELYIVRTDDQFYNCHSLTKEVLANVERFLSYSPPPLSGLSDLEYEIAKGTALENLLFLPCAEHLRSDKCTCLLSHSAVNSQQNLELNSLKCINYPSEKSCLYDIPNDNISDEPSLCDCDVHKHNQNENLVPNNRVQIHRSPAQNLVGENNHDVDNSDLPVLSTDQDESLLLFEDVNTEFDDVSLSPLNSKSESLPVSDKTAISETPLVSQFLISDELLLDNNSELQDQITRDANSFKSRDQRGVQEEKVKNHEDIFDCSRDLFSVTFDLGFCSPDSDDEILEHTSDSNRPLDDLYGRYLEIKEISDANYVSNQALIPRDHSKNFTSGTVIIPSNEDMQNPNYVHLPLSAAKNEELLSPGYSQFSLPVQKKVMSTPLSKSNTLNSFSKIRKEILKTPDSSKEKVNLQRFKEALNSTFDYSEFSLEKSKSSGPMYLHKSCHSVEDGQLLTSNESEDDEIFRRKVKRAKGNVLNSPEDQKNSEVDSPLHAVKKRRFPINRSELSSSDESENFPKPCSQLEDFKVCNGNARRGIKVPKRQSHLKHVARKFLDDEAELSEEDAEYVSSDENDESENEQDSSLLDFLNDETQLSQAINDSEMRAIYMKSLRSPMMNNKYKMIHKTHKNINIFSQIPEQDETYLEDSFCVDEEESCKGQSSEEEVCVDFNLITDDCFANSKKYKTRRAVMLKEMMEQNCAHSKKKLSRIILPDDSSEEENNVNDKRESNIAVNPSTVKKNKQQDHCLNSVPSGSSAQSKVRSTPRVNPLAKQSKQTSLNLKDTISEVSDFKPQNHNEVQSTTPPFTTVDSQKDCRKFPVPQKDGSALEDSSTSGASCSKSRPHLAGTHTSLRLPQEGKGTCILVGGHEITSGLEVISSLRAIHGLQVEVCPLNGCDYIVSNRMVVERRSQSEMLNSVNKNKFIEQIQHLQSMFERICVIVEKDREKTGDTSRMFRRTKSYDSLLTTLIGAGIRILFSSCQEETADLLKELSLVEQRKNVGIHVPTVVNSNKSEALQFYLSIPNISYITALNMCHQFSSVKRMANSSLQEISMYAQVTHQKAEEIYRYIHYVFDIQMLPNDLNQDRLKSDI.

A compositionally biased stretch (polar residues) spans 1 to 37; that stretch reads MSGRQRTLFQTWGSSISRSSGTPGCSSGTERPQSPGS. The segment at 1 to 45 is disordered; sequence MSGRQRTLFQTWGSSISRSSGTPGCSSGTERPQSPGSSKAPLPAA. Residue serine 34 is modified to Phosphoserine. The Helicase ATP-binding domain maps to 98–266; sequence ISRAALFCNT…QVITNLLIGQ (169 aa). Position 111–118 (111–118) interacts with ATP; the sequence is LPTGLGKT. Residues 214-217 carry the DEAH box motif; that stretch reads DEAH. The 176-residue stretch at 452 to 627 folds into the Helicase C-terminal domain; the sequence is KLEEVVIEHF…VLHFYQRSPR (176 aa). The interval 661–800 is interaction with CENPS/CENPSX; that stretch reads SIFSYRDGMR…TSTFIAPRNE (140 aa). Disordered regions lie at residues 1433 to 1476, 1518 to 1540, and 1668 to 1809; these read NVLN…NFPK, LSEE…EQDS, and ILPD…HTSL. Over residues 1518–1538 the composition is skewed to acidic residues; sequence LSEEDAEYVSSDENDESENEQ. Phosphoserine occurs at positions 1673 and 1674. Composition is skewed to polar residues over residues 1703–1745, 1753–1767, and 1786–1797; these read HCLN…ISEV, HNEV…TTVD, and EDSSTSGASCSK. The interval 1727–2048 is interaction with FAAP24; it reads LAKQSKQTSL…LNQDRLKSDI (322 aa).

It belongs to the DEAD box helicase family. DEAH subfamily. FANCM sub-subfamily. Component of the Fanconi anemia (FA) core complex, which consists of CENPS, CENPX, FANCA, FANCB, FANCC, FANCE, FANCF, FANCG, FANCL, FANCM, FAAP24 and FAAP100. The FA core complex associates with Bloom syndrome (BLM) complex, which consists of at least BLM, DNA topoisomerase 3-alpha/TOP3A, RMI1/BLAP75, RPA1/RPA70 and RPA2/RPA32. This supercomplex between FA and BLM complexes has been called BRAFT. Forms a discrete complex with CENPS and CENPX, called FANCM-MHF; this interaction stimulates DNA binding and replication fork remodeling by FANCM and stabilizes the binding partners. Forms a heterodimer with FAAP24; this interaction increases FANCM single-stranded DNA-binding activity. In terms of processing, phosphorylated; hyperphosphorylated in response to genotoxic stress. Expressed in germ cells of fetal and adult ovaries. In fetal ovaries, it is present in oogonia but expression is stronger in pachytene stage oocytes. Expressed in oocytes arrested at the diplotene stage of prophase I during the last trimester of pregnancy and in adults. Expressed in the testis.

It localises to the nucleus. It catalyses the reaction ATP + H2O = ADP + phosphate + H(+). DNA-dependent ATPase component of the Fanconi anemia (FA) core complex. Required for the normal activation of the FA pathway, leading to monoubiquitination of the FANCI-FANCD2 complex in response to DNA damage, cellular resistance to DNA cross-linking drugs, and prevention of chromosomal breakage. In complex with CENPS and CENPX, binds double-stranded DNA (dsDNA), fork-structured DNA (fsDNA) and Holliday junction substrates. Its ATP-dependent DNA branch migration activity can process branched DNA structures such as a movable replication fork. This activity is strongly stimulated in the presence of CENPS and CENPX. In complex with FAAP24, efficiently binds to single-strand DNA (ssDNA), splayed-arm DNA, and 3'-flap substrates. In vitro, on its own, strongly binds ssDNA oligomers and weakly fsDNA, but does not bind to dsDNA. This chain is Fanconi anemia group M protein (FANCM), found in Homo sapiens (Human).